We begin with the raw amino-acid sequence, 518 residues long: Protein PNS1 (518 aa).

Residues 1–14 (MSDYPPPNYPPPNH) show a composition bias toward pro residues. Positions 1 to 24 (MSDYPPPNYPPPNHPQYQQQQDET) are disordered. Over 1 to 63 (MSDYPPPNYP…KVEKPKFNDW (63 aa)) the chain is Cytoplasmic. The helical transmembrane segment at 64 to 84 (PFAIFFWLVVAGFIAVAGITL) threads the bilayer. Residues 85–111 (NALRSTYGFQGGSIYGSGNTFTLNTNT) lie on the Extracellular side of the membrane. The chain crosses the membrane as a helical span at residues 112–132 (IILFAFIIVMAFILSAAIIVF). The Cytoplasmic portion of the chain corresponds to 133-139 (ARLAPKA). A helical transmembrane segment spans residues 140–160 (FIVTGVILNVVLGIGTAIFYF). The Extracellular segment spans residues 161 to 163 (VEK). Residues 164–184 (YYSAAIVFLIFALFGAWCYWS) form a helical membrane-spanning segment. At 185–210 (SRHRIPLSATILTIVIDVMKMYPSTL) the chain is on the cytoplasmic side. Residues 211-231 (IASFIGLIFSAAFSALFSIVI) form a helical membrane-spanning segment. The Extracellular portion of the chain corresponds to 232-256 (VATYVKYDPNSNNEACSVGGGSCSK). A helical membrane pass occupies residues 257–277 (GKLIGVLVFVFFAGYYISEVI). The Cytoplasmic portion of the chain corresponds to 278–314 (RNVIHVVIAGIYGTWYYLANSDQGAPKHPALSSLKRA). Residues 315-335 (LTYCFGSITFGSLIVSLIQLL) traverse the membrane as a helical segment. Residues 336-351 (RQFISILRSNFAADGN) lie on the Extracellular side of the membrane. A helical membrane pass occupies residues 352–372 (GWGVCGMIILDFFVGFIDWLV). The Cytoplasmic portion of the chain corresponds to 373–417 (RYLNKYAYCYVALYGKSYIKSAKDTFDLIRFKGMDALINDMFINT). A helical membrane pass occupies residues 418-438 (ALNLYSLFVAYLVALLAYLYL). Topologically, residues 439–445 (KFTKPEY) are extracellular. A helical membrane pass occupies residues 446 to 466 (NSGGAFYAPVIAFAFLIAGQI). Residues 467–518 (NRISLTVIESGTATFFVALAKDPEIFQMTNRNRFDDIFRNYPQVLEKITSDH) are Cytoplasmic-facing.

This sequence belongs to the CTL (choline transporter-like) family.

Its subcellular location is the cell membrane. In terms of biological role, probably involved in transport through the plasma membrane. This Candida albicans (strain SC5314 / ATCC MYA-2876) (Yeast) protein is Protein PNS1 (PNS1).